The following is a 207-amino-acid chain: Outer-membrane lipoprotein LolB (207 aa).

Residues 1-21 (MPLPDFRLIRLLPLAALVLTA) form the signal peptide. Residue Cys22 is the site of N-palmitoyl cysteine attachment. Cys22 carries S-diacylglycerol cysteine lipidation.

It belongs to the LolB family. In terms of assembly, monomer.

The protein resides in the cell outer membrane. Functionally, plays a critical role in the incorporation of lipoproteins in the outer membrane after they are released by the LolA protein. The sequence is that of Outer-membrane lipoprotein LolB from Escherichia coli O127:H6 (strain E2348/69 / EPEC).